We begin with the raw amino-acid sequence, 1273 residues long: Kinesin-like protein KIN-7O (1273 aa).

The Kinesin motor domain occupies Arg3–Val327. Gly79–Thr86 provides a ligand contact to ATP. A coiled-coil region spans residues Val333–Ala408. Positions Ser452–Thr474 are disordered. Residues Glu453–Ser467 show a composition bias toward polar residues. Coiled-coil stretches lie at residues Glu602–Val674 and Val751–Glu1023.

The protein belongs to the TRAFAC class myosin-kinesin ATPase superfamily. Kinesin family. KIN-7 subfamily.

The chain is Kinesin-like protein KIN-7O from Arabidopsis thaliana (Mouse-ear cress).